The primary structure comprises 296 residues: MTEAMLTTDFPQLNLVHSGKVRDMYAIPGHDDKLLMVATDRISAYDVILSAIPGKGAILTQLSLFWFDLLADIVDNHMITADVTEYPEACAPYAEQLRGRSILVKRTKPLPIECIVRGYISGSFWKAYQQDTNVCGFQLPEGMQESDKFPEPIFTPSTKAELGDHDENISFERMQEIVGVEKAEQIARISKALYTRAADYARTKGVIIADTKFELGEVDGKIILIDEVLTPDSSRFWAADKYEPGKSQESFDKQYLRDYLSSLDWDKNPPAPPLPEEIIVKTKARYDEAVERITGK.

The protein belongs to the SAICAR synthetase family.

The enzyme catalyses 5-amino-1-(5-phospho-D-ribosyl)imidazole-4-carboxylate + L-aspartate + ATP = (2S)-2-[5-amino-1-(5-phospho-beta-D-ribosyl)imidazole-4-carboxamido]succinate + ADP + phosphate + 2 H(+). It functions in the pathway purine metabolism; IMP biosynthesis via de novo pathway; 5-amino-1-(5-phospho-D-ribosyl)imidazole-4-carboxamide from 5-amino-1-(5-phospho-D-ribosyl)imidazole-4-carboxylate: step 1/2. The protein is Phosphoribosylaminoimidazole-succinocarboxamide synthase of Desulfotalea psychrophila (strain LSv54 / DSM 12343).